Consider the following 20-residue polypeptide: Short cationic peptide-3a (20 aa).

Glu20 is modified (glutamic acid 1-amide).

As to expression, expressed by the venom gland.

It localises to the secreted. The polypeptide is Short cationic peptide-3a (Cupiennius salei (American wandering spider)).